Here is a 252-residue protein sequence, read N- to C-terminus: Pantothenate synthetase (252 aa).

29-36 (MGNLHAGH) provides a ligand contact to ATP. The active-site Proton donor is H36. Q60 is a binding site for (R)-pantoate. Q60 serves as a coordination point for beta-alanine. 146-149 (GEKD) serves as a coordination point for ATP. A (R)-pantoate-binding site is contributed by Q152. Residues V175 and 183–186 (CSSR) each bind ATP.

This sequence belongs to the pantothenate synthetase family. Homodimer.

It is found in the cytoplasm. It carries out the reaction (R)-pantoate + beta-alanine + ATP = (R)-pantothenate + AMP + diphosphate + H(+). It functions in the pathway cofactor biosynthesis; (R)-pantothenate biosynthesis; (R)-pantothenate from (R)-pantoate and beta-alanine: step 1/1. Its function is as follows. Catalyzes the condensation of pantoate with beta-alanine in an ATP-dependent reaction via a pantoyl-adenylate intermediate. The polypeptide is Pantothenate synthetase (Legionella pneumophila (strain Corby)).